Consider the following 191-residue polypeptide: Fe/S biogenesis protein NfuA (191 aa).

[4Fe-4S] cluster-binding residues include cysteine 149 and cysteine 152.

Belongs to the NfuA family. As to quaternary structure, homodimer. [4Fe-4S] cluster serves as cofactor.

Involved in iron-sulfur cluster biogenesis. Binds a 4Fe-4S cluster, can transfer this cluster to apoproteins, and thereby intervenes in the maturation of Fe/S proteins. Could also act as a scaffold/chaperone for damaged Fe/S proteins. The sequence is that of Fe/S biogenesis protein NfuA from Salmonella choleraesuis (strain SC-B67).